A 523-amino-acid polypeptide reads, in one-letter code: uncharacterized protein (523 aa).

A chloroplast-targeting transit peptide spans 1-63 (MACVSTCLIL…NRHGIAVVKA (63 aa)). Helical transmembrane passes span 180–200 (VSFG…IIAL), 386–406 (ALVI…NTLL), and 423–443 (IYPL…IRWF).

The protein resides in the plastid. The protein localises to the chloroplast membrane. This is an uncharacterized protein from Arabidopsis thaliana (Mouse-ear cress).